Consider the following 380-residue polypeptide: All-trans-retinol dehydrogenase [NAD(+)] ADH4 (380 aa).

Cys-47 contributes to the Zn(2+) binding site. Position 48-49 (48-49) interacts with NAD(+); sequence HT. The Zn(2+) site is built by His-69, Cys-99, Cys-102, Cys-105, and Cys-113. Residue Ser-121 is modified to Phosphoserine. Cys-180 lines the Zn(2+) pocket. NAD(+) contacts are provided by residues 205–210, Asp-229, and Lys-234; that span reads GLGGVG. Residue Ser-278 is modified to Phosphoserine. NAD(+) is bound by residues 298–300, 323–325, and Arg-375; these read IGV and TFF.

It belongs to the zinc-containing alcohol dehydrogenase family. Class-II subfamily. In terms of assembly, homodimer. Requires Zn(2+) as cofactor.

It is found in the cytoplasm. It carries out the reaction all-trans-retinol + NAD(+) = all-trans-retinal + NADH + H(+). The enzyme catalyses 9-cis-retinol + NAD(+) = 9-cis-retinal + NADH + H(+). It catalyses the reaction 20-oxo-(5Z,8Z,11Z,14Z)-eicosatetraenoate + NAD(+) + H2O = (5Z,8Z,11Z,14Z)-eicosatetraenedioate + NADH + 2 H(+). The catalysed reaction is 20-hydroxy-(5Z,8Z,11Z,14Z)-eicosatetraenoate + NAD(+) = 20-oxo-(5Z,8Z,11Z,14Z)-eicosatetraenoate + NADH + H(+). It carries out the reaction 1,4-benzoquinone + NADH + H(+) = hydroquinone + NAD(+). With respect to regulation, oxydation of 20-HETE is inhibited by low concentrations of N-heptylformamide. Oxydation of 20-HETE is a decreased by 55-65% by either all-trans-retinol or all-trans-retinoic acid. Strongly inhibited by omega-hydroxy fatty acids. Catalyzes the NAD-dependent oxidation of either all-trans-retinol or 9-cis-retinol. Also oxidizes long chain omega-hydroxy fatty acids, such as 20-HETE, producing both the intermediate aldehyde, 20-oxoarachidonate and the end product, a dicarboxylic acid, (5Z,8Z,11Z,14Z)-eicosatetraenedioate. Also catalyzes the reduction of benzoquinones. The chain is All-trans-retinol dehydrogenase [NAD(+)] ADH4 from Homo sapiens (Human).